The following is a 420-amino-acid chain: Carbohydrate sulfotransferase 12 (420 aa).

The Cytoplasmic portion of the chain corresponds to 1–5 (MAKSR). Residues 6–26 (LFCLLVALGSVFMILFIIVYW) traverse the membrane as a helical; Signal-anchor for type II membrane protein segment. The Lumenal segment spans residues 27–420 (DNVGTANLNL…YPKPDDLLSV (394 aa)). N76 and N139 each carry an N-linked (GlcNAc...) asparagine glycan. 176-182 (PKVACTN) provides a ligand contact to 3'-phosphoadenylyl sulfate. N215 carries an N-linked (GlcNAc...) asparagine glycan. 251 to 259 (RDPFVRLIS) contributes to the 3'-phosphoadenylyl sulfate binding site. N-linked (GlcNAc...) asparagine glycans are attached at residues N286 and N376.

The protein belongs to the sulfotransferase 2 family.

It localises to the golgi apparatus membrane. The catalysed reaction is chondroitin beta-D-glucuronate + n 3'-phosphoadenylyl sulfate = chondroitin 4'-sulfate + n adenosine 3',5'-bisphosphate + n H(+). Catalyzes the transfer of sulfate to position 4 of the N-acetylgalactosamine (GalNAc) residue of chondroitin and desulfated dermatan sulfate. Chondroitin sulfate constitutes the predominant proteoglycan present in cartilage and is distributed on the surfaces of many cells and extracellular matrices. In Xenopus laevis (African clawed frog), this protein is Carbohydrate sulfotransferase 12 (chst12).